A 118-amino-acid chain; its full sequence is Cycloviolacin-O8 (118 aa).

A signal peptide spans 1 to 22; sequence MEMKNMVVGLFLIAAFALPALA. Positions 23-84 are excised as a propeptide; sequence TNFEKDFITH…THSNSINALG (62 aa). The segment at residues 85–115 is a cross-link (cyclopeptide (Gly-Asn)); that stretch reads GTLPCGESCVWIPCISSVVGCSCKSKVCYKN. 3 disulfide bridges follow: C89-C105, C93-C107, and C98-C112. Residues 116-118 constitute a propeptide that is removed on maturation; sequence SLA.

In terms of processing, cycloviolacin-O8 is a cyclic peptide. In terms of tissue distribution, expressed in leaves, petals, petioles and roots but not in runners (at protein level).

Its function is as follows. Probably participates in a plant defense mechanism. The polypeptide is Cycloviolacin-O8 (Voc1) (Viola odorata (Sweet violet)).